The primary structure comprises 230 residues: Thioredoxin domain-containing protein PLP3A (230 aa).

Residues 89 to 173 (VSEGDFLGEV…GVAMDRLVGF (85 aa)) enclose the Thioredoxin domain. The disordered stretch occupies residues 197-230 (LSKKKKEEDDEDAEYQESIRRSVRSSENLDSDSD).

This sequence belongs to the phosducin family. As to quaternary structure, interacts with TUBB2, TUBB3, TUBB4 and TUBB5. As to expression, expressed in embryos, shoot meristems, leaf primordia, root meristems, floral meristems and young floral buds.

Its subcellular location is the cytoplasm. It localises to the nucleus. In terms of biological role, tubulin-binding protein involved in microtubule formation. This Arabidopsis thaliana (Mouse-ear cress) protein is Thioredoxin domain-containing protein PLP3A (PLP3A).